Here is a 189-residue protein sequence, read N- to C-terminus: HTH-type transcriptional repressor AcnR (189 aa).

The HTH tetR-type domain occupies 10 to 70 (AERKVEILSG…EVAHEDMRKM (61 aa)). The H-T-H motif DNA-binding region spans 33 to 52 (TVARLEETIGKSRGAIFHHY). Residues 79 to 80 (LI), R130, and Q134 contribute to the citrate site. E181 contacts Mg(2+). R185 contributes to the citrate binding site.

In terms of assembly, homodimer.

Functionally, acnR negatively controls the expression of the aconitase gene acn. The protein is HTH-type transcriptional repressor AcnR of Corynebacterium jeikeium (strain K411).